A 113-amino-acid chain; its full sequence is U11-theraphotoxin-Hhn1a (113 aa).

A signal peptide spans 1 to 21 (MNTVRVTFLLVFVLAVSLGQA). A propeptide spanning residues 22-74 (DKDENRMEMQEKTEQGKSYLDFAENLLLQKLEELVAKLLEEDSEESRNSRQKR) is cleaved from the precursor. Intrachain disulfides connect C75-C90, C82-C95, and C89-C110.

It belongs to the neurotoxin 14 (magi-1) family. 01 (HNTX-16) subfamily. As to expression, expressed by the venom gland.

Its subcellular location is the secreted. In terms of biological role, probable ion channel inhibitor. The polypeptide is U11-theraphotoxin-Hhn1a (Cyriopagopus hainanus (Chinese bird spider)).